A 432-amino-acid polypeptide reads, in one-letter code: Glutamyl-tRNA reductase (432 aa).

Residues 55–58 (TCNR), Ser-114, 119–121 (ETQ), and Gln-125 each bind substrate. Residue Cys-56 is the Nucleophile of the active site. Residue 194–199 (GAGEMI) coordinates NADP(+).

This sequence belongs to the glutamyl-tRNA reductase family. As to quaternary structure, homodimer.

It catalyses the reaction (S)-4-amino-5-oxopentanoate + tRNA(Glu) + NADP(+) = L-glutamyl-tRNA(Glu) + NADPH + H(+). It participates in porphyrin-containing compound metabolism; protoporphyrin-IX biosynthesis; 5-aminolevulinate from L-glutamyl-tRNA(Glu): step 1/2. Functionally, catalyzes the NADPH-dependent reduction of glutamyl-tRNA(Glu) to glutamate 1-semialdehyde (GSA). The chain is Glutamyl-tRNA reductase from Burkholderia ambifaria (strain MC40-6).